We begin with the raw amino-acid sequence, 247 residues long: Pyridoxine 5'-phosphate synthase (247 aa).

N7 lines the 3-amino-2-oxopropyl phosphate pocket. 9-10 (DH) lines the 1-deoxy-D-xylulose 5-phosphate pocket. R18 provides a ligand contact to 3-amino-2-oxopropyl phosphate. The active-site Proton acceptor is the H43. 1-deoxy-D-xylulose 5-phosphate-binding residues include R45 and H50. The Proton acceptor role is filled by E70. 1-deoxy-D-xylulose 5-phosphate is bound at residue T100. Residue H190 is the Proton donor of the active site. Residues G191 and 212 to 213 (GH) contribute to the 3-amino-2-oxopropyl phosphate site.

It belongs to the PNP synthase family. Homooctamer; tetramer of dimers.

It localises to the cytoplasm. It carries out the reaction 3-amino-2-oxopropyl phosphate + 1-deoxy-D-xylulose 5-phosphate = pyridoxine 5'-phosphate + phosphate + 2 H2O + H(+). Its pathway is cofactor biosynthesis; pyridoxine 5'-phosphate biosynthesis; pyridoxine 5'-phosphate from D-erythrose 4-phosphate: step 5/5. Catalyzes the complicated ring closure reaction between the two acyclic compounds 1-deoxy-D-xylulose-5-phosphate (DXP) and 3-amino-2-oxopropyl phosphate (1-amino-acetone-3-phosphate or AAP) to form pyridoxine 5'-phosphate (PNP) and inorganic phosphate. This Synechococcus sp. (strain WH7803) protein is Pyridoxine 5'-phosphate synthase.